The chain runs to 122 residues: UPF0231 protein VIBHAR_03438 (122 aa).

Belongs to the UPF0231 family.

The polypeptide is UPF0231 protein VIBHAR_03438 (Vibrio campbellii (strain ATCC BAA-1116)).